The sequence spans 793 residues: Acetyl-CoA decarbonylase/synthase complex subunit alpha (793 aa).

4 residues coordinate [4Fe-4S] cluster: cysteine 55, cysteine 58, cysteine 63, and cysteine 73. Position 96 (histidine 96) interacts with CO. Positions 229, 257, and 309 each coordinate [Ni-4Fe-4S] cluster. 2 consecutive 4Fe-4S ferredoxin-type domains span residues 393 to 422 (EQQFKDTLATCTECNQCAFVCPPHIRISEM) and 432 to 461 (EPFSSTYEVCVGCQRCEQTCPQEIPILKLY). Residues cysteine 403, cysteine 406, cysteine 409, cysteine 413, cysteine 441, cysteine 444, cysteine 447, and cysteine 451 each coordinate [4Fe-4S] cluster. Residues cysteine 509, cysteine 538, and cysteine 573 each contribute to the [Ni-4Fe-4S] cluster site.

It belongs to the Ni-containing carbon monoxide dehydrogenase family. As to quaternary structure, heterotetramer of two alpha and two epsilon subunits. The ACDS complex is made up of alpha, epsilon, beta, gamma and delta subunits with a probable stoichiometry of (alpha(2)epsilon(2))(4)-beta(8)-(gamma(1)delta(1))(8). [4Fe-4S] cluster is required as a cofactor. [Ni-4Fe-4S] cluster serves as cofactor.

The enzyme catalyses CO + 2 oxidized [2Fe-2S]-[ferredoxin] + H2O = 2 reduced [2Fe-2S]-[ferredoxin] + CO2 + 2 H(+). In terms of biological role, part of the ACDS complex that catalyzes the reversible cleavage of acetyl-CoA, allowing autotrophic growth from CO(2). The alpha-epsilon subcomponent functions as a carbon monoxide dehydrogenase. The polypeptide is Acetyl-CoA decarbonylase/synthase complex subunit alpha (Methanothrix soehngenii (Methanosaeta concilii)).